Consider the following 553-residue polypeptide: Pumilio domain-containing protein 5 (553 aa).

8 Pumilio repeats span residues 146-184 (DVVS…VLFD), 185-223 (KLTE…RLVR), 224-260 (KMCD…KLVE), 261-296 (KISS…SFFV), 297-335 (KFLC…HCFN), 347-384 (SVAR…TIIE), 386-421 (CLLR…EMMD), and 432-472 (ETNR…KMVA). The interval 499 to 514 (FSSGKKIIESLQKLNV) is RNA-binding.

In terms of tissue distribution, detected in differentiating oocytes with highest levels observed in developing ooctyes in the distal portion of the proximal gonad.

The protein localises to the cytoplasm. It is found in the P-body. In terms of biological role, RNA-binding protein that binds to the consensus sequence 5'-CUCUGUAUCUUGU-3' in mRNA 3'-UTRs and modulates mRNA expression and stability. Functions redundantly with puf-6 and puf-7 in oocyte formation and organization, early embryonic cell divisions, and repression of expression of glp-1 and other maternal mRNAs in late oogenesis. The sequence is that of Pumilio domain-containing protein 5 from Caenorhabditis elegans.